Reading from the N-terminus, the 196-residue chain is Pyridoxal 5'-phosphate synthase subunit PdxT (196 aa).

L-glutamine is bound at residue Gly-47 to Ser-49. The active-site Nucleophile is Cys-79. Residues Arg-106 and Ile-134 to Arg-135 contribute to the L-glutamine site. Catalysis depends on charge relay system residues His-170 and Glu-172.

Belongs to the glutaminase PdxT/SNO family. As to quaternary structure, in the presence of PdxS, forms a dodecamer of heterodimers. Only shows activity in the heterodimer.

The catalysed reaction is aldehydo-D-ribose 5-phosphate + D-glyceraldehyde 3-phosphate + L-glutamine = pyridoxal 5'-phosphate + L-glutamate + phosphate + 3 H2O + H(+). The enzyme catalyses L-glutamine + H2O = L-glutamate + NH4(+). The protein operates within cofactor biosynthesis; pyridoxal 5'-phosphate biosynthesis. Its function is as follows. Catalyzes the hydrolysis of glutamine to glutamate and ammonia as part of the biosynthesis of pyridoxal 5'-phosphate. The resulting ammonia molecule is channeled to the active site of PdxS. In Bacillus cereus (strain Q1), this protein is Pyridoxal 5'-phosphate synthase subunit PdxT.